Consider the following 350-residue polypeptide: Protein RecA (350 aa).

ATP is bound at residue 67–74 (GPESSGKT).

Belongs to the RecA family.

It is found in the cytoplasm. In terms of biological role, can catalyze the hydrolysis of ATP in the presence of single-stranded DNA, the ATP-dependent uptake of single-stranded DNA by duplex DNA, and the ATP-dependent hybridization of homologous single-stranded DNAs. It interacts with LexA causing its activation and leading to its autocatalytic cleavage. This Baumannia cicadellinicola subsp. Homalodisca coagulata protein is Protein RecA.